We begin with the raw amino-acid sequence, 435 residues long: Protein phosphatase 2C homolog 2 (435 aa).

The PPM-type phosphatase domain occupies Ile-23 to Leu-298. Mn(2+)-binding residues include Asp-71, Gly-72, Asp-240, and Asp-289. A disordered region spans residues Asp-366 to Ser-435. Residues Glu-381–Gly-392 are compositionally biased toward basic and acidic residues. The segment covering Gly-409–Thr-418 has biased composition (low complexity). Over residues Val-419 to Ser-435 the composition is skewed to polar residues.

Belongs to the PP2C family. Mg(2+) serves as cofactor. It depends on Mn(2+) as a cofactor.

It is found in the cytoplasm. Its subcellular location is the nucleus. It carries out the reaction O-phospho-L-seryl-[protein] + H2O = L-seryl-[protein] + phosphate. The catalysed reaction is O-phospho-L-threonyl-[protein] + H2O = L-threonyl-[protein] + phosphate. In terms of biological role, dephosphorylating regulator for many key proteins. Dephosphorylates phosphoglycerate kinase pgk1 at least on 'Ser-203' to negatively regulate targeting of pgk1 to the mitochondrion, thereby negatively regulating production of acetyl-CoA and consequently aflatoxin biosynthesis. This Aspergillus flavus (strain ATCC 200026 / FGSC A1120 / IAM 13836 / NRRL 3357 / JCM 12722 / SRRC 167) protein is Protein phosphatase 2C homolog 2.